The primary structure comprises 409 residues: Dual-specificity RNA methyltransferase RlmN (409 aa).

Catalysis depends on Glu-117, which acts as the Proton acceptor. The Radical SAM core domain maps to 128–377 (LNGRKTLCIS…CTIRQTRGDD (250 aa)). Residues Cys-135 and Cys-382 are joined by a disulfide bond. 3 residues coordinate [4Fe-4S] cluster: Cys-142, Cys-146, and Cys-149. S-adenosyl-L-methionine is bound by residues 205-206 (GE), Ser-237, 259-261 (SLH), and Asn-339. Cys-382 serves as the catalytic S-methylcysteine intermediate.

The protein belongs to the radical SAM superfamily. RlmN family. [4Fe-4S] cluster is required as a cofactor.

The protein localises to the cytoplasm. It carries out the reaction adenosine(2503) in 23S rRNA + 2 reduced [2Fe-2S]-[ferredoxin] + 2 S-adenosyl-L-methionine = 2-methyladenosine(2503) in 23S rRNA + 5'-deoxyadenosine + L-methionine + 2 oxidized [2Fe-2S]-[ferredoxin] + S-adenosyl-L-homocysteine. It catalyses the reaction adenosine(37) in tRNA + 2 reduced [2Fe-2S]-[ferredoxin] + 2 S-adenosyl-L-methionine = 2-methyladenosine(37) in tRNA + 5'-deoxyadenosine + L-methionine + 2 oxidized [2Fe-2S]-[ferredoxin] + S-adenosyl-L-homocysteine. In terms of biological role, specifically methylates position 2 of adenine 2503 in 23S rRNA and position 2 of adenine 37 in tRNAs. m2A2503 modification seems to play a crucial role in the proofreading step occurring at the peptidyl transferase center and thus would serve to optimize ribosomal fidelity. The sequence is that of Dual-specificity RNA methyltransferase RlmN from Psychrobacter arcticus (strain DSM 17307 / VKM B-2377 / 273-4).